The sequence spans 535 residues: UDP-glucuronosyltransferase 1A1 (535 aa).

Positions 1–29 are cleaved as a signal peptide; that stretch reads MTVVCWSSRLLLLLPYLLLCVFGPSASHA. 3 N-linked (GlcNAc...) asparagine glycosylation sites follow: asparagine 89, asparagine 297, and asparagine 435. The chain crosses the membrane as a helical span at residues 493–509; sequence VIGFLLAIVLTVVFIVF.

It belongs to the UDP-glycosyltransferase family. As to quaternary structure, homodimers. Homooligomer. Interacts with UGT1A3, UGT1A4, UGT1A6, UGT1A7, UGT1A8, UGT1A9 and UGT1A10 to form heterodimers. As to expression, highly expressed in liver and at lower levels in colon, kidney, stomach and intestine.

It localises to the endoplasmic reticulum membrane. The enzyme catalyses glucuronate acceptor + UDP-alpha-D-glucuronate = acceptor beta-D-glucuronoside + UDP + H(+). It carries out the reaction 17beta-estradiol + UDP-alpha-D-glucuronate = 17beta-estradiol 3-O-(beta-D-glucuronate) + UDP + H(+). The catalysed reaction is 2-hydroxyestrone + UDP-alpha-D-glucuronate = 2-hydroxyestrone 3-O-(beta-D-glucuronate) + UDP + H(+). It catalyses the reaction 2-hydroxy-17beta-estradiol + UDP-alpha-D-glucuronate = 2-hydroxy-17beta-estradiol 3-O-(beta-D-glucuronate) + UDP + H(+). The enzyme catalyses 2-methoxy-17beta-estradiol + UDP-alpha-D-glucuronate = 2-methoxy-17beta-estradiol 3-O-(beta-D-glucuronate) + UDP + H(+). It carries out the reaction 17alpha-estradiol + UDP-alpha-D-glucuronate = 17alpha-estradiol 3-O-(beta-D-glucuronate) + UDP + H(+). The catalysed reaction is 16beta,17beta-estriol + UDP-alpha-D-glucuronate = 16beta,17beta-estriol 16-O-(beta-D-glucuronate) + UDP + H(+). It catalyses the reaction losartan + UDP-alpha-D-glucuronate = losartan-2-N-beta-D-glucuronide + UDP. The enzyme catalyses prunetin + UDP-alpha-D-glucuronate = prunetin-4'-O-beta-D-glucuronide + UDP. It carries out the reaction SN-38 + UDP-alpha-D-glucuronate = SN-38 O-beta-D-glucuronide + UDP + H(+). The catalysed reaction is (4Z,15Z)-bilirubin IXalpha + UDP-alpha-D-glucuronate = (4Z,15Z)-bilirubin IXalpha C12-beta-D-glucuronoside + UDP. It catalyses the reaction (4Z,15Z)-bilirubin IXalpha + UDP-alpha-D-glucuronate = (4Z,15Z)-bilirubin IXalpha C8-beta-D-glucuronoside + UDP. The enzyme catalyses (4Z,15Z)-bilirubin IXalpha C8-beta-D-glucuronoside + UDP-alpha-D-glucuronate = (4Z,15Z)-bilirubin IXalpha C8,C12-beta-D-bisglucuronoside + UDP. It carries out the reaction (4Z,15Z)-bilirubin IXalpha C12-beta-D-glucuronoside + UDP-alpha-D-glucuronate = (4Z,15Z)-bilirubin IXalpha C8,C12-beta-D-bisglucuronoside + UDP. The catalysed reaction is 8-iso-prostaglandin F2alpha + UDP-alpha-D-glucuronate = 8-iso-prostaglandin F2alpha-glucuronide + UDP + H(+). It catalyses the reaction (5Z,8Z,11Z,14Z)-eicosatetraenoate + UDP-alpha-D-glucuronate = O-[(5Z),(8Z),(11Z),(14Z)-eicosatetraenoyl]-beta-D-glucuronate + UDP. The enzyme catalyses 15-hydroxy-(5Z,8Z,11Z,13E)-eicosatetraenoate + UDP-alpha-D-glucuronate = 15-O-(beta-D-glucuronosyl)-(5Z,8Z,11Z,14Z)-eicosatetraenoate + UDP + H(+). It carries out the reaction 20-hydroxy-(5Z,8Z,11Z,14Z)-eicosatetraenoate + UDP-alpha-D-glucuronate = 20-O-(beta-D-glucuronosyl)-(5Z,8Z,11Z,14Z)-eicosatetraenoate + UDP + H(+). The catalysed reaction is prostaglandin B1 + UDP-alpha-D-glucuronate = 15-O-(beta-D-glucuronosyl)-prostaglandin B1 + UDP + H(+). It catalyses the reaction (E)-ferulate + UDP-alpha-D-glucuronate = (E)-4-O-(beta-D-glucuronosyl)-ferulate + UDP + H(+). The enzyme catalyses (E)-ferulate + UDP-alpha-D-glucuronate = (E)-ferulic acid beta-D-glucuronate ester + UDP. Its function is as follows. UDP-glucuronosyltransferase (UGT) that catalyzes phase II biotransformation reactions in which lipophilic substrates are conjugated with glucuronic acid to increase the metabolite's water solubility, thereby facilitating excretion into either the urine or bile. Essential for the elimination and detoxification of drugs, xenobiotics and endogenous compounds. Catalyzes the glucuronidation of endogenous estrogen hormones such as estradiol, estrone and estriol. Involved in the glucuronidation of bilirubin, a degradation product occurring in the normal catabolic pathway that breaks down heme in vertebrates. Involved in the glucuronidation of arachidonic acid (AA) and AA-derived eicosanoids including 15-HETE, 20-HETE, PGB1 and F2-isoprostane (8-iso-PGF2alpha). Involved in the glucuronidation of the phytochemical ferulic acid at the phenolic or the carboxylic acid group. Also catalyzes the glucuronidation the isoflavones genistein, daidzein, glycitein, formononetin, biochanin A and prunetin, which are phytoestrogens with anticancer and cardiovascular properties. Involved in the glucuronidation of the AGTR1 angiotensin receptor antagonist losartan, a drug which can inhibit the effect of angiotensin II. Involved in the biotransformation of 7-ethyl-10-hydroxycamptothecin (SN-38), the pharmacologically active metabolite of the anticancer drug irinotecan. This is UDP-glucuronosyltransferase 1A1 from Mus musculus (Mouse).